The sequence spans 105 residues: Antimicrobial peptide 1 (105 aa).

An N-terminal signal peptide occupies residues 1–26; the sequence is METKRLAYVMFVLVCLFLAMAQPSQA. Disulfide bonds link Cys37/Cys93, Cys47/Cys105, and Cys49/Cys77.

In terms of tissue distribution, detected at higher levels in needles and twigs from canker-resistant seedlings than in needles from canker-susceptible plants. During summer, detected on cankered, healthy and marginal bark. During winter, detected at lower levels in cankered bark and bark from the canker margin than in healthy bark (at protein level).

The protein resides in the secreted. It is found in the cell wall. In terms of biological role, antimicrobial peptide. This is Antimicrobial peptide 1 from Pinus monticola (Western white pine).